Reading from the N-terminus, the 60-residue chain is Protein translocase subunit SecE (60 aa).

The chain crosses the membrane as a helical span at residues 31–51; the sequence is VIVVSTVIFFLVFFYALDLGI.

Belongs to the SecE/SEC61-gamma family. In terms of assembly, component of the Sec protein translocase complex. Heterotrimer consisting of SecY, SecE and SecG subunits. The heterotrimers can form oligomers, although 1 heterotrimer is thought to be able to translocate proteins. Interacts with the ribosome. Interacts with SecDF, and other proteins may be involved. Interacts with SecA.

It is found in the cell membrane. Essential subunit of the Sec protein translocation channel SecYEG. Clamps together the 2 halves of SecY. May contact the channel plug during translocation. The sequence is that of Protein translocase subunit SecE from Staphylococcus aureus (strain Mu50 / ATCC 700699).